Here is a 280-residue protein sequence, read N- to C-terminus: 4-diphosphocytidyl-2-C-methyl-D-erythritol kinase (280 aa).

Residue Lys8 is part of the active site. 91 to 101 (PVAAGLAGGST) is an ATP binding site. The active site involves Asp133.

Belongs to the GHMP kinase family. IspE subfamily.

It carries out the reaction 4-CDP-2-C-methyl-D-erythritol + ATP = 4-CDP-2-C-methyl-D-erythritol 2-phosphate + ADP + H(+). It functions in the pathway isoprenoid biosynthesis; isopentenyl diphosphate biosynthesis via DXP pathway; isopentenyl diphosphate from 1-deoxy-D-xylulose 5-phosphate: step 3/6. Catalyzes the phosphorylation of the position 2 hydroxy group of 4-diphosphocytidyl-2C-methyl-D-erythritol. The sequence is that of 4-diphosphocytidyl-2-C-methyl-D-erythritol kinase from Clostridium botulinum (strain Okra / Type B1).